A 56-amino-acid polypeptide reads, in one-letter code: AEIDRPVSLSGLTEGEAREFHGVFMTSFMVFIAVAIVAHILAWMWRPWIPGPEGYA.

Residues 1 to 22 lie on the Cytoplasmic side of the membrane; that stretch reads AEIDRPVSLSGLTEGEAREFHG. A bacteriochlorophyll is bound by residues H21 and H39. The chain crosses the membrane as a helical span at residues 23 to 45; that stretch reads VFMTSFMVFIAVAIVAHILAWMW. At 46–56 the chain is on the periplasmic side; that stretch reads RPWIPGPEGYA.

Belongs to the antenna complex beta subunit family. The core complex is formed by different alpha and beta chains, binding bacteriochlorophyll molecules, and arranged most probably in tetrameric structures disposed around the reaction center. The non-pigmented gamma chains may constitute additional components.

The protein resides in the cell inner membrane. Functionally, antenna complexes are light-harvesting systems, which transfer the excitation energy to the reaction centers. The sequence is that of Light-harvesting protein B-880 beta chain from Afifella marina (Rhodobium marinum).